The following is a 326-amino-acid chain: Regulation of nuclear pre-mRNA domain-containing protein 1B (326 aa).

S2 carries the post-translational modification N-acetylserine. In terms of domain architecture, CID spans 2–133; sequence SSFSESALEK…QLKLSMEDSK (132 aa). The disordered stretch occupies residues 127 to 149; that stretch reads LSMEDSKSPPPKATEEKKSLKRT. A compositionally biased stretch (basic and acidic residues) spans 128–144; it reads SMEDSKSPPPKATEEKK. S132 and S134 each carry phosphoserine. Y161 is modified (phosphotyrosine). Phosphoserine occurs at positions 166 and 299.

Belongs to the UPF0400 (RTT103) family. Homodimer. May form a heterodimer with RPRD1A. Associates with RPAP2. Associates with the RNA polymerase II complex. In terms of tissue distribution, preferentially expressed in a range of tumor tissues including colon, lung, liver, breast, prostate, stomach, uterine endometrium and cervical cancers with higher levels in tumors than in adjacent non-tumor tissue (at protein level).

It localises to the nucleus. Its function is as follows. Interacts with phosphorylated C-terminal heptapeptide repeat domain (CTD) of the largest RNA polymerase II subunit POLR2A, and participates in dephosphorylation of the CTD by RPAP2. Transcriptional regulator which enhances expression of CCND1. Promotes binding of RNA polymerase II to the CCDN1 promoter and to the termination region before the poly-A site but decreases its binding after the poly-A site. Prevents RNA polymerase II from reading through the 3' end termination site and may allow it to be recruited back to the promoter through promotion of the formation of a chromatin loop. Also enhances the transcription of a number of other cell cycle-related genes including CDK2, CDK4, CDK6 and cyclin-E but not CDKN1A, CDKN1B or cyclin-A. Promotes cell proliferation. In Homo sapiens (Human), this protein is Regulation of nuclear pre-mRNA domain-containing protein 1B (RPRD1B).